A 312-amino-acid chain; its full sequence is Olfactory receptor 2J1 (312 aa).

The Extracellular segment spans residues 1-26 (MLMKKNASFEDFFLLLGFSNWPHLEV). Asparagine 6 is a glycosylation site (N-linked (GlcNAc...) asparagine). Residues 27–50 (VLFVVILIFYLITLIGNLFIIILS) traverse the membrane as a helical segment. The Cytoplasmic segment spans residues 51 to 58 (YLDSHLHT). Residues 59-80 (PMYFFLSNLSFLDLCYTTSSIP) form a helical membrane-spanning segment. Residues 81–101 (QLLVNLWGPEKTISYAGCTVQ) are Extracellular-facing. Cysteine 98 and cysteine 190 form a disulfide bridge. A helical transmembrane segment spans residues 102–121 (LYFVLALGTAECVLLVVMSY). The Cytoplasmic segment spans residues 122–140 (DRYAAVCRPLHYTVLMHPR). The helical transmembrane segment at 141–159 (FCRLLAAASWVSGFTTSAL) threads the bilayer. The Extracellular segment spans residues 160-196 (HSSFTFWIPLCRHRLVDHFFCEVPALLRLSCVDTQAN). Residues 197–220 (ELTLMVMSSIFVLIPLILILTSYG) form a helical membrane-spanning segment. Residues 221-237 (AIARAVLSMQSTTGLQK) are Cytoplasmic-facing. Residues 238–260 (VLRTCGAHLMVVSLFFIPVMCMY) traverse the membrane as a helical segment. At 261-273 (LQPPSENSQDQGK) the chain is on the extracellular side. Residues 274–293 (FIALFYTVVTPSLNPLIYTF) form a helical membrane-spanning segment. Over 294–312 (RNKDVRGAVKRLMGWEWGM) the chain is Cytoplasmic.

Belongs to the G-protein coupled receptor 1 family.

Its subcellular location is the cell membrane. In terms of biological role, odorant receptor. This chain is Olfactory receptor 2J1 (OR2J1), found in Homo sapiens (Human).